A 65-amino-acid chain; its full sequence is Large ribosomal subunit protein bL35 (65 aa).

The span at 1 to 16 shows a compositional bias: basic residues; sequence MPKQKTHRASAKRFKR. The tract at residues 1–20 is disordered; it reads MPKQKTHRASAKRFKRTGSG.

Belongs to the bacterial ribosomal protein bL35 family.

This chain is Large ribosomal subunit protein bL35, found in Streptococcus equi subsp. equi (strain 4047).